The primary structure comprises 167 residues: Gametocyte-specific factor 1 (167 aa).

Position 8 is a phosphoserine (Ser-8). 2 consecutive CHHC U11-48K-type zinc fingers follow at residues 14 to 41 (LLQCPYDKNHQIRACRFPYHLIKCRKNH) and 48 to 75 (LATCPFNARHQVPRAEISHHISSCDDRS). The Zn(2+) site is built by Cys-17, His-23, His-33, Cys-37, Cys-51, His-57, His-67, and Cys-71.

The protein belongs to the UPF0224 (FAM112) family.

It localises to the cytoplasm. Required for spermatogenesis and is involved in the suppression of retrotransposon transcription in male germ cells. The protein is Gametocyte-specific factor 1 (GTSF1) of Homo sapiens (Human).